An 828-amino-acid chain; its full sequence is Periplasmic nitrate reductase (828 aa).

A signal peptide (tat-type signal) is located at residues 1 to 31 (MKLSRRSFMKANAVAAAAAAAGLSVPGVARA). Residues 39–95 (IKWDKAPCRFCGTGCGVLVGTQQGRVVACQGDPDAPVNRGLNCIKGYFLPKIMYGKD) enclose the 4Fe-4S Mo/W bis-MGD-type domain. Residues C46, C49, C53, and C81 each coordinate [4Fe-4S] cluster. Mo-bis(molybdopterin guanine dinucleotide) is bound by residues K83, Q150, N175, C179, 212-219 (WGANMAEM), 243-247 (STYQH), 262-264 (QSD), M372, Q376, N482, 508-509 (SD), K531, D558, and 718-727 (TGRVLEHWHT). Position 794 (F794) interacts with substrate. Mo-bis(molybdopterin guanine dinucleotide) is bound by residues N802 and K819.

This sequence belongs to the prokaryotic molybdopterin-containing oxidoreductase family. NasA/NapA/NarB subfamily. As to quaternary structure, component of the periplasmic nitrate reductase NapAB complex composed of NapA and NapB. [4Fe-4S] cluster is required as a cofactor. The cofactor is Mo-bis(molybdopterin guanine dinucleotide). Post-translationally, predicted to be exported by the Tat system. The position of the signal peptide cleavage has not been experimentally proven.

The protein localises to the periplasm. It catalyses the reaction 2 Fe(II)-[cytochrome] + nitrate + 2 H(+) = 2 Fe(III)-[cytochrome] + nitrite + H2O. Its function is as follows. Catalytic subunit of the periplasmic nitrate reductase complex NapAB. Receives electrons from NapB and catalyzes the reduction of nitrate to nitrite. This chain is Periplasmic nitrate reductase, found in Escherichia coli O157:H7 (strain EC4115 / EHEC).